Here is a 460-residue protein sequence, read N- to C-terminus: Cyclin-T1-2 (460 aa).

Disordered regions lie at residues 1 to 20 (MDEA…SSVA) and 285 to 345 (QPIS…QDHS). Residues 314–324 (SDDHSVHDGSR) show a composition bias toward basic and acidic residues. The span at 332-345 (NSESEAQKNLQDHS) shows a compositional bias: polar residues.

Belongs to the cyclin family. Cyclin T subfamily.

The polypeptide is Cyclin-T1-2 (CYCT1-2) (Arabidopsis thaliana (Mouse-ear cress)).